A 162-amino-acid polypeptide reads, in one-letter code: Putative pre-16S rRNA nuclease (162 aa).

The protein belongs to the YqgF nuclease family.

The protein resides in the cytoplasm. Its function is as follows. Could be a nuclease involved in processing of the 5'-end of pre-16S rRNA. In Brucella melitensis biotype 2 (strain ATCC 23457), this protein is Putative pre-16S rRNA nuclease.